An 800-amino-acid chain; its full sequence is Probable replication endonuclease from prophage-like region (800 aa).

Active-site O-(5'-phospho-DNA)-tyrosine intermediate residues include Tyr-503 and Tyr-507.

The protein belongs to the phage GPA family.

Possible endonuclease which induces a single-strand cut and initiates DNA replication. In Salmonella paratyphi A (strain ATCC 9150 / SARB42), this protein is Probable replication endonuclease from prophage-like region.